We begin with the raw amino-acid sequence, 214 residues long: Small ribosomal subunit protein uS3 (214 aa).

One can recognise a KH type-2 domain in the interval 39–107; that stretch reads IRAYLLKKPA…EVWVAVEEVK (69 aa).

It belongs to the universal ribosomal protein uS3 family. As to quaternary structure, part of the 30S ribosomal subunit. Forms a tight complex with proteins S10 and S14.

In terms of biological role, binds the lower part of the 30S subunit head. Binds mRNA in the 70S ribosome, positioning it for translation. The polypeptide is Small ribosomal subunit protein uS3 (Protochlamydia amoebophila (strain UWE25)).